The primary structure comprises 475 residues: DNA-binding protein D-ETS-6 (475 aa).

The tract at residues 42 to 150 (SIGSGNETKL…VSPVEVPVDP (109 aa)) is disordered. The segment covering 70–108 (SSSSTSDSSASSYSSTDSDSGSSTSSSSIRSQLPALNLP) has biased composition (low complexity). The span at 109-121 (VPLPLATPTPPAV) shows a compositional bias: pro residues. The segment covering 122–144 (SSPHQAPSPRRNSSDSNRSVSPV) has biased composition (low complexity). Residues 132 to 219 (RNSSDSNRSV…QHFAISLYHA (88 aa)) enclose the PNT domain. The ETS DNA-binding region spans 255 to 335 (IQLWQFLLEL…HGKRYAYKFD (81 aa)). Residues 350–475 (GDPASSMLGS…PVTPTTNAFN (126 aa)) are disordered. Residues 375-388 (PPLHHHPQHSHPHH) are compositionally biased toward basic residues. Residues 401–436 (SSPASNSSSLGFPSSSTASSQASPGQAPASSSASTS) show a composition bias toward low complexity. Over residues 453–475 (RTSTSSAGNYDQGPVTPTTNAFN) the composition is skewed to polar residues.

The protein belongs to the ETS family. As to expression, embryonic ventral nervous system and 1 pair of neurons in each thoracic segment.

It is found in the nucleus. The polypeptide is DNA-binding protein D-ETS-6 (Ets21C) (Drosophila melanogaster (Fruit fly)).